A 335-amino-acid polypeptide reads, in one-letter code: Erlin-2 (335 aa).

The Cytoplasmic segment spans residues 1–2; sequence MS. The helical transmembrane segment at 3 to 23 threads the bilayer; it reads HAGAIAAIGVALIAAALFSAI. Topologically, residues 24–335 are lumenal; sequence HKIEEGHVGV…ALNEPAVGDE (312 aa). Asparagine 106 carries N-linked (GlcNAc...) asparagine glycosylation. Positions 310 to 321 are enriched in polar residues; sequence AGPSVQSATLLQ. Residues 310 to 335 are disordered; the sequence is AGPSVQSATLLQDDSPALNEPAVGDE.

It belongs to the band 7/mec-2 family.

Its subcellular location is the endoplasmic reticulum membrane. In terms of biological role, mediates the endoplasmic reticulum-associated degradation (ERAD) of inositol 1,4,5-trisphosphate receptors (IP3Rs). Promotes sterol-accelerated ERAD of HMGCR. Involved in regulation of cellular cholesterol homeostasis by regulation the SREBP signaling pathway. This is Erlin-2 (erlin2) from Xenopus tropicalis (Western clawed frog).